Reading from the N-terminus, the 437-residue chain is Phosphoribosylamine--glycine ligase (437 aa).

Residues 110–322 (KNLLRSADIP…LVEVMQAVVD (213 aa)) form the ATP-grasp domain. Residue 142–203 (EPTDPVNVVV…EERLTGPEVS (62 aa)) coordinates ATP. Residues glutamate 292 and asparagine 294 each contribute to the Mg(2+) site.

Belongs to the GARS family. The cofactor is Mg(2+). It depends on Mn(2+) as a cofactor.

The catalysed reaction is 5-phospho-beta-D-ribosylamine + glycine + ATP = N(1)-(5-phospho-beta-D-ribosyl)glycinamide + ADP + phosphate + H(+). It functions in the pathway purine metabolism; IMP biosynthesis via de novo pathway; N(1)-(5-phospho-D-ribosyl)glycinamide from 5-phospho-alpha-D-ribose 1-diphosphate: step 2/2. The polypeptide is Phosphoribosylamine--glycine ligase (Rhodopirellula baltica (strain DSM 10527 / NCIMB 13988 / SH1)).